Here is a 164-residue protein sequence, read N- to C-terminus: Protein 4 (164 aa).

The protein is Protein 4 of Lettuce big-vein associated virus (isolate Japan/Kagawa) (LBVaV).